The sequence spans 394 residues: Phosphoglycerate kinase (394 aa).

Substrate contacts are provided by residues 21-23 (DFN), Arg-36, 59-62 (HLGR), Arg-118, and Arg-151. A Phosphoserine modification is found at Ser-183. Lys-201 lines the ATP pocket. Thr-299 bears the Phosphothreonine mark. ATP contacts are provided by residues Asn-316, Glu-323, and 350-353 (GGDS).

The protein belongs to the phosphoglycerate kinase family. As to quaternary structure, monomer.

It is found in the cytoplasm. The catalysed reaction is (2R)-3-phosphoglycerate + ATP = (2R)-3-phospho-glyceroyl phosphate + ADP. It participates in carbohydrate degradation; glycolysis; pyruvate from D-glyceraldehyde 3-phosphate: step 2/5. The protein is Phosphoglycerate kinase of Geobacillus stearothermophilus (Bacillus stearothermophilus).